Consider the following 131-residue polypeptide: Profilin-3 (131 aa).

The protein belongs to the profilin family. As to quaternary structure, occurs in many kinds of cells as a complex with monomeric actin in a 1:1 ratio.

The protein resides in the cytoplasm. It is found in the cytoskeleton. In terms of biological role, binds to actin and affects the structure of the cytoskeleton. At high concentrations, profilin prevents the polymerization of actin, whereas it enhances it at low concentrations. By binding to PIP2, it inhibits the formation of IP3 and DG. This Lilium longiflorum (Trumpet lily) protein is Profilin-3.